Reading from the N-terminus, the 96-residue chain is ASNSD1 upstream open reading frame protein (96 aa).

A compositionally biased stretch (basic and acidic residues) spans 1 to 10; sequence MPSRGTRPED. The interval 1–28 is disordered; sequence MPSRGTRPEDSSVLIPTDNSTPHKEDLS. Residues 23–96 adopt a coiled-coil conformation; sequence HKEDLSSKIK…ENLDKTKIKK (74 aa).

In terms of assembly, component of the PAQosome complex which is responsible for the biogenesis of several protein complexes and which consists of R2TP complex members RUVBL1, RUVBL2, RPAP3 and PIH1D1, URI complex members PFDN2, PFDN6, PDRG1, UXT and URI1 as well as ASDURF, POLR2E and DNAAF10/WDR92.

Its subcellular location is the cytoplasm. In Homo sapiens (Human), this protein is ASNSD1 upstream open reading frame protein.